The primary structure comprises 89 residues: Small ribosomal subunit protein uS15 (89 aa).

Belongs to the universal ribosomal protein uS15 family. Part of the 30S ribosomal subunit. Forms a bridge to the 50S subunit in the 70S ribosome, contacting the 23S rRNA.

In terms of biological role, one of the primary rRNA binding proteins, it binds directly to 16S rRNA where it helps nucleate assembly of the platform of the 30S subunit by binding and bridging several RNA helices of the 16S rRNA. Functionally, forms an intersubunit bridge (bridge B4) with the 23S rRNA of the 50S subunit in the ribosome. This is Small ribosomal subunit protein uS15 from Exiguobacterium sp. (strain ATCC BAA-1283 / AT1b).